Reading from the N-terminus, the 129-residue chain is uncharacterized protein (129 aa).

A disordered region spans residues 1–129 (MGRMASPLRS…PARQSARMAR (129 aa)). Over residues 18–46 (ESTRHKETSTVRVETSSHREETSSHRVET) the composition is skewed to basic and acidic residues. The span at 47–59 (SSRQVRTSSRQVE) shows a compositional bias: low complexity. Polar residues predominate over residues 70–97 (LTPSTKRLPQFLEVSSQHVETSSQCTET).

This is an uncharacterized protein from Mus musculus (Mouse).